A 356-amino-acid polypeptide reads, in one-letter code: Biotin synthase (356 aa).

Residues 54 to 278 (GEVQLCTLLS…VAVARITMPL (225 aa)) form the Radical SAM core domain. [4Fe-4S] cluster-binding residues include Cys69, Cys73, and Cys76. Residues Cys113, Cys144, Cys204, and Arg282 each coordinate [2Fe-2S] cluster.

This sequence belongs to the radical SAM superfamily. Biotin synthase family. As to quaternary structure, homodimer. [4Fe-4S] cluster serves as cofactor. It depends on [2Fe-2S] cluster as a cofactor.

The catalysed reaction is (4R,5S)-dethiobiotin + (sulfur carrier)-SH + 2 reduced [2Fe-2S]-[ferredoxin] + 2 S-adenosyl-L-methionine = (sulfur carrier)-H + biotin + 2 5'-deoxyadenosine + 2 L-methionine + 2 oxidized [2Fe-2S]-[ferredoxin]. It participates in cofactor biosynthesis; biotin biosynthesis; biotin from 7,8-diaminononanoate: step 2/2. Catalyzes the conversion of dethiobiotin (DTB) to biotin by the insertion of a sulfur atom into dethiobiotin via a radical-based mechanism. The protein is Biotin synthase of Novosphingobium aromaticivorans (strain ATCC 700278 / DSM 12444 / CCUG 56034 / CIP 105152 / NBRC 16084 / F199).